The sequence spans 169 residues: Macro domain-containing protein SCO6450 (169 aa).

Residues 1–169 (MTGITLVQGD…AYEAFAARLG (169 aa)) form the Macro domain.

The protein belongs to the MacroD-type family.

This chain is Macro domain-containing protein SCO6450, found in Streptomyces coelicolor (strain ATCC BAA-471 / A3(2) / M145).